A 756-amino-acid chain; its full sequence is Alpha-1,2-mannosyltransferase MNN26 (756 aa).

Residues 1–10 (MSLRRLSPSH) are Cytoplasmic-facing. A helical membrane pass occupies residues 11 to 31 (LILGTLVLGVIIFNLYVLTST). Residues 32 to 756 (HEDIKKVKGP…NGKNKQGAAS (725 aa)) are Extracellular-facing. A compositionally biased stretch (polar residues) spans 723 to 734 (LGEKSQPKQPEI). Positions 723-756 (LGEKSQPKQPEINNNNNNNNNDDDNGKNKQGAAS) are disordered.

It belongs to the MNN1/MNT family.

The protein resides in the golgi apparatus membrane. The protein operates within protein modification; protein glycosylation. Functionally, alpha-1,2-mannosyltransferase required for cell wall integrity. Responsible for addition of the first alpha-1,2-linked mannose to form the branches on the mannan backbone of oligosaccharides. Addition of alpha-1,2-mannose is required for stabilization of the alpha-1,6-mannose backbone and hence regulates mannan fibril length; and is important for both immune recognition and virulence. The polypeptide is Alpha-1,2-mannosyltransferase MNN26 (MNN26) (Candida albicans (strain SC5314 / ATCC MYA-2876) (Yeast)).